The following is a 144-amino-acid chain: Nucleoside diphosphate kinase (144 aa).

ATP is bound by residues Lys-11, Phe-59, Arg-87, Thr-93, Arg-104, and Asn-114. Residue His-117 is the Pros-phosphohistidine intermediate of the active site.

The protein belongs to the NDK family. In terms of assembly, homotetramer. Mg(2+) serves as cofactor.

It is found in the cytoplasm. The enzyme catalyses a 2'-deoxyribonucleoside 5'-diphosphate + ATP = a 2'-deoxyribonucleoside 5'-triphosphate + ADP. It catalyses the reaction a ribonucleoside 5'-diphosphate + ATP = a ribonucleoside 5'-triphosphate + ADP. Its function is as follows. Major role in the synthesis of nucleoside triphosphates other than ATP. The ATP gamma phosphate is transferred to the NDP beta phosphate via a ping-pong mechanism, using a phosphorylated active-site intermediate. This is Nucleoside diphosphate kinase from Aliivibrio salmonicida (strain LFI1238) (Vibrio salmonicida (strain LFI1238)).